We begin with the raw amino-acid sequence, 348 residues long: Phenylalanine--tRNA ligase alpha subunit (348 aa).

Residue Glu-259 coordinates Mg(2+).

This sequence belongs to the class-II aminoacyl-tRNA synthetase family. Phe-tRNA synthetase alpha subunit type 1 subfamily. As to quaternary structure, tetramer of two alpha and two beta subunits. Requires Mg(2+) as cofactor.

The protein localises to the cytoplasm. The enzyme catalyses tRNA(Phe) + L-phenylalanine + ATP = L-phenylalanyl-tRNA(Phe) + AMP + diphosphate + H(+). This is Phenylalanine--tRNA ligase alpha subunit from Latilactobacillus sakei subsp. sakei (strain 23K) (Lactobacillus sakei subsp. sakei).